Here is an 82-residue protein sequence, read N- to C-terminus: Diphthamide biosynthesis protein 3 (82 aa).

One can recognise a DPH-type MB domain in the interval 4–60; sequence FHDEVEIEDFQYDEDSETYFYPCPCGDNFAITKEDLENGEDVATCPSCSLIIKVIYD. Fe cation is bound by residues Cys26, Cys28, Cys48, and Cys51.

This sequence belongs to the DPH3 family. In terms of assembly, component of the 2-(3-amino-3-carboxypropyl)histidine synthase complex composed of DPH1, DPH2, DPH3 and a NADH-dependent reductase. Interacts with SERGEF. Fe(2+) is required as a cofactor. In terms of tissue distribution, widely expressed with highest levels in heart, liver, kidney and testis.

It localises to the cytoplasm. It is found in the nucleus. The enzyme catalyses [3Fe-4S](1+)-[protein] + Fe(2+)-[Dph3] = [3Fe-4S](0)-[protein] + Fe(3+)-[Dph3]. It catalyses the reaction 2 [3Fe-4S](0)-[protein] + 2 Fe(2+)-[Dph3] + NADH = 2 [4Fe-4S](1+)-[protein] + 2 [Dph3] + NAD(+) + H(+). It functions in the pathway protein modification; peptidyl-diphthamide biosynthesis. Its function is as follows. Required for the first step of diphthamide biosynthesis, a post-translational modification of histidine which occurs in elongation factor 2. DPH1 and DPH2 transfer a 3-amino-3-carboxypropyl (ACP) group from S-adenosyl-L-methionine (SAM) to a histidine residue, the reaction is assisted by a reduction system comprising DPH3 and a NADH-dependent reductase. Acts as an electron donor to reduce the Fe-S cluster in DPH1-DPH2 keeping the [4Fe-4S] clusters in the active and reduced state. Restores iron to DPH1-DPH2 iron-sulfur clusters which have degraded from [4Fe-4S] to [3Fe-4S] by donating an iron atom to reform [4Fe-4S] clusters, in a manner dependent on the presence of elongation factor 2 and SAM. Associates with the elongator complex and is required for tRNA Wobble base modifications mediated by the elongator complex. The elongator complex is required for multiple tRNA modifications, including mcm5U (5-methoxycarbonylmethyl uridine), mcm5s 2U (5-methoxycarbonylmethyl-2-thiouridine), and ncm5U (5-carbamoylmethyl uridine). In Mus musculus (Mouse), this protein is Diphthamide biosynthesis protein 3.